We begin with the raw amino-acid sequence, 205 residues long: UPF0637 protein OB1420 (205 aa).

This sequence belongs to the UPF0637 family.

This Oceanobacillus iheyensis (strain DSM 14371 / CIP 107618 / JCM 11309 / KCTC 3954 / HTE831) protein is UPF0637 protein OB1420.